The following is a 183-amino-acid chain: UPF0398 protein PEPE_0933 (183 aa).

Belongs to the UPF0398 family.

The sequence is that of UPF0398 protein PEPE_0933 from Pediococcus pentosaceus (strain ATCC 25745 / CCUG 21536 / LMG 10740 / 183-1w).